The chain runs to 121 residues: uncharacterized protein (121 aa).

Disordered regions lie at residues 1 to 28 (MGCA…QNGD) and 60 to 81 (QENL…EIPG). Residues S95 and S115 each carry the phosphoserine modification.

This is an uncharacterized protein from Mus musculus (Mouse).